The chain runs to 417 residues: Actin-related protein 10 (417 aa).

This sequence belongs to the actin family. As to quaternary structure, subunit of dynactin, a multiprotein complex part of a tripartite complex with dynein and a adapter, such as BICDL1, BICD2 or HOOK3. The dynactin complex is built around ACTR1A/ACTB filament and consists of an actin-related filament composed of a shoulder domain, a pointed end and a barbed end. Its length is defined by its flexible shoulder domain. The soulder is composed of 2 DCTN1 subunits, 4 DCTN2 and 2 DCTN3. The 4 DCNT2 (via N-terminus) bind the ACTR1A filament and act as molecular rulers to determine the length. The pointed end is important for binding dynein-dynactin cargo adapters. Consists of 4 subunits: ACTR10, DCNT4, DCTN5 and DCTN6. The barbed end is composed of a CAPZA1:CAPZB heterodimers, which binds ACTR1A/ACTB filament and dynactin and stabilizes dynactin.

The protein localises to the cytoplasm. Its subcellular location is the cytoskeleton. In terms of biological role, part of the dynactin complex that activates the molecular motor dynein for ultra-processive transport along microtubules. This chain is Actin-related protein 10 (ACTR10), found in Homo sapiens (Human).